Consider the following 165-residue polypeptide: 3-isopropylmalate dehydratase small subunit (165 aa).

The protein belongs to the LeuD family. LeuD type 2 subfamily. Heterodimer of LeuC and LeuD.

The enzyme catalyses (2R,3S)-3-isopropylmalate = (2S)-2-isopropylmalate. It participates in amino-acid biosynthesis; L-leucine biosynthesis; L-leucine from 3-methyl-2-oxobutanoate: step 2/4. In terms of biological role, catalyzes the isomerization between 2-isopropylmalate and 3-isopropylmalate, via the formation of 2-isopropylmaleate. The protein is 3-isopropylmalate dehydratase small subunit of Helicobacter hepaticus (strain ATCC 51449 / 3B1).